The chain runs to 127 residues: Modulator protein MzrA (127 aa).

At 1 to 9 the chain is on the cytoplasmic side; that stretch reads MQLPRVTLR. Residues 10-32 form a helical membrane-spanning segment; the sequence is QMTWTTSAIVLLGITLLLWSAFR. Residues 33-127 are Periplasmic-facing; the sequence is HQESTLAIRA…LLRDTSHRFG (95 aa).

It belongs to the MzrA family. As to quaternary structure, interacts with EnvZ.

Its subcellular location is the cell inner membrane. In terms of biological role, modulates the activity of the EnvZ/OmpR two-component regulatory system, probably by directly modulating EnvZ enzymatic activity and increasing stability of phosphorylated OmpR. The protein is Modulator protein MzrA of Escherichia fergusonii (strain ATCC 35469 / DSM 13698 / CCUG 18766 / IAM 14443 / JCM 21226 / LMG 7866 / NBRC 102419 / NCTC 12128 / CDC 0568-73).